Reading from the N-terminus, the 428-residue chain is 3-phosphoshikimate 1-carboxyvinyltransferase (428 aa).

Residues Lys-22, Ser-23, and Arg-27 each coordinate 3-phosphoshikimate. Lys-22 provides a ligand contact to phosphoenolpyruvate. Phosphoenolpyruvate contacts are provided by Gly-96 and Arg-124. Ser-171, Ser-172, Gln-173, Ser-198, Asp-311, and Lys-338 together coordinate 3-phosphoshikimate. Gln-173 lines the phosphoenolpyruvate pocket. Catalysis depends on Asp-311, which acts as the Proton acceptor. 2 residues coordinate phosphoenolpyruvate: Arg-342 and Arg-383.

It belongs to the EPSP synthase family. Monomer.

Its subcellular location is the cytoplasm. It catalyses the reaction 3-phosphoshikimate + phosphoenolpyruvate = 5-O-(1-carboxyvinyl)-3-phosphoshikimate + phosphate. It participates in metabolic intermediate biosynthesis; chorismate biosynthesis. In terms of biological role, catalyzes the transfer of the enolpyruvyl moiety of phosphoenolpyruvate (PEP) to the 5-hydroxyl of shikimate-3-phosphate (S3P) to produce enolpyruvyl shikimate-3-phosphate and inorganic phosphate. The sequence is that of 3-phosphoshikimate 1-carboxyvinyltransferase from Methanopyrus kandleri (strain AV19 / DSM 6324 / JCM 9639 / NBRC 100938).